Here is a 170-residue protein sequence, read N- to C-terminus: MAILDICTYPDPILRQKAASVENIDEALIKLIDDMTETMYEAPGIGLAANQVGRSLSLIVVDLQRQDEEHGLIVLINPQIVATQGEITWEEGCLSVPEYFSAVKRHAEVVVRGYGRDGKEMEIQAGGLLAVALQHEIDHLEGRLFIDRLNPITRDIFKRKWKKKLKEATA.

Residues C93 and H135 each coordinate Fe cation. E136 is an active-site residue. A Fe cation-binding site is contributed by H139.

This sequence belongs to the polypeptide deformylase family. Fe(2+) serves as cofactor.

The catalysed reaction is N-terminal N-formyl-L-methionyl-[peptide] + H2O = N-terminal L-methionyl-[peptide] + formate. In terms of biological role, removes the formyl group from the N-terminal Met of newly synthesized proteins. Requires at least a dipeptide for an efficient rate of reaction. N-terminal L-methionine is a prerequisite for activity but the enzyme has broad specificity at other positions. The protein is Peptide deformylase of Syntrophobacter fumaroxidans (strain DSM 10017 / MPOB).